The chain runs to 261 residues: 1-(5-phosphoribosyl)-5-[(5-phosphoribosylamino)methylideneamino] imidazole-4-carboxamide isomerase (261 aa).

Residue aspartate 7 is the Proton acceptor of the active site. The Proton donor role is filled by aspartate 129.

It belongs to the HisA/HisF family.

It localises to the cytoplasm. It catalyses the reaction 1-(5-phospho-beta-D-ribosyl)-5-[(5-phospho-beta-D-ribosylamino)methylideneamino]imidazole-4-carboxamide = 5-[(5-phospho-1-deoxy-D-ribulos-1-ylimino)methylamino]-1-(5-phospho-beta-D-ribosyl)imidazole-4-carboxamide. It participates in amino-acid biosynthesis; L-histidine biosynthesis; L-histidine from 5-phospho-alpha-D-ribose 1-diphosphate: step 4/9. The chain is 1-(5-phosphoribosyl)-5-[(5-phosphoribosylamino)methylideneamino] imidazole-4-carboxamide isomerase from Colwellia psychrerythraea (strain 34H / ATCC BAA-681) (Vibrio psychroerythus).